Consider the following 434-residue polypeptide: MDDQSRMLQTLAGVNLAGHSVQGGMALPPPPHGHEGADGDGRKQDIGDILHQIMTITDQSLDEAQAKKHALNCHRMKPALFSVLCEIKEKTGLSIRGAQEEDPPDPQLMRLDNMLLAEGVSGPEKGGGSAAAAAAAAASGGSSDNSIEHSDYRAKLTQIRQIYHTELEKYEQACNEFTTHVMNLLREQSRTRPISPKEIERMVGIIHRKFSSIQMQLKQSTCEAVMILRSRFLDARRKRRNFSKQATEILNEYFYSHLSNPYPSEEAKEELAKKCSITVSQVSNWFGNKRIRYKKNIGKFQEEANLYAAKTAVTAAHAVAAAVQNNQTNSPTTPNSGSSGSFNLPNSGDMFMNMQSLNGDSYQGSQVGANVQSQVDTLRHVINQTGGYSDGLGANSLYSPHNLNANGGWQDATTPSSVTSPTEGPGSVHSDTSN.

The interval 20–41 is disordered; it reads SVQGGMALPPPPHGHEGADGDG. Over residues 32–41 the composition is skewed to basic and acidic residues; that stretch reads HGHEGADGDG. Residues 41–234 enclose the PBC domain; it reads GRKQDIGDIL…VMILRSRFLD (194 aa). Residues 48–127 form a PBC-A region; that stretch reads DILHQIMTIT…EGVSGPEKGG (80 aa). Residues 130–234 are PBC-B; the sequence is AAAAAAAAAS…VMILRSRFLD (105 aa). The homeobox; TALE-type DNA-binding region spans 235-297; the sequence is ARRKRRNFSK…NKRIRYKKNI (63 aa). The span at 326–341 shows a compositional bias: low complexity; that stretch reads NQTNSPTTPNSGSSGS. 2 disordered regions span residues 326–349 and 405–434; these read NQTN…NSGD and ANGG…DTSN. Over residues 405 to 422 the composition is skewed to polar residues; that stretch reads ANGGWQDATTPSSVTSPT.

It belongs to the TALE/PBX homeobox family. Interacts with PBXIP1.

It localises to the nucleus. In terms of biological role, transcriptional activator that binds the sequence 5'-ATCAATCAA-3'. This Mus musculus (Mouse) protein is Pre-B-cell leukemia transcription factor 3 (Pbx3).